Reading from the N-terminus, the 102-residue chain is Small ribosomal subunit protein bS18 (102 aa).

The protein belongs to the bacterial ribosomal protein bS18 family. Part of the 30S ribosomal subunit. Forms a tight heterodimer with protein bS6.

Its function is as follows. Binds as a heterodimer with protein bS6 to the central domain of the 16S rRNA, where it helps stabilize the platform of the 30S subunit. The chain is Small ribosomal subunit protein bS18 from Orientia tsutsugamushi (strain Boryong) (Rickettsia tsutsugamushi).